Consider the following 185-residue polypeptide: Large ribosomal subunit protein uL5 (185 aa).

Belongs to the universal ribosomal protein uL5 family. As to quaternary structure, part of the 50S ribosomal subunit; part of the 5S rRNA/L5/L18/L25 subcomplex. Contacts the 5S rRNA and the P site tRNA. Forms a bridge to the 30S subunit in the 70S ribosome.

In terms of biological role, this is one of the proteins that bind and probably mediate the attachment of the 5S RNA into the large ribosomal subunit, where it forms part of the central protuberance. In the 70S ribosome it contacts protein S13 of the 30S subunit (bridge B1b), connecting the 2 subunits; this bridge is implicated in subunit movement. Contacts the P site tRNA; the 5S rRNA and some of its associated proteins might help stabilize positioning of ribosome-bound tRNAs. The polypeptide is Large ribosomal subunit protein uL5 (Parvibaculum lavamentivorans (strain DS-1 / DSM 13023 / NCIMB 13966)).